The following is a 69-amino-acid chain: MAQDLSEKELLRMEVEQLKKEVKNPRDLISKTGKEIKDYVEAQAGTDPLLKGIPEDKNPFKEKGTCVLS.

Cysteine methyl ester is present on Cys-66. Cys-66 is lipidated: S-farnesyl cysteine. A propeptide spans 67-69 (removed in mature form); that stretch reads VLS.

The protein belongs to the G protein gamma family. In terms of assembly, g proteins are composed of 3 units, alpha, beta and gamma.

Its subcellular location is the cell membrane. In terms of biological role, guanine nucleotide-binding proteins (G proteins) are involved as a modulator or transducer in various transmembrane signaling systems. The beta and gamma chains are required for the GTPase activity, for replacement of GDP by GTP, and for G protein-effector interaction. In Mus musculus (Mouse), this protein is Guanine nucleotide-binding protein G(I)/G(S)/G(O) subunit gamma-T2 (Gngt2).